Reading from the N-terminus, the 67-residue chain is Beta-defensin 1 (67 aa).

A signal peptide spans 1 to 22 (MRIHYLLFAVLFLFLMPVPGEG). 3 cysteine pairs are disulfide-bonded: Cys-33–Cys-62, Cys-40–Cys-55, and Cys-45–Cys-63.

As to quaternary structure, monomer. Homodimer. Highly expressed in tongue, nasopharyngeal mucosa and skin, and to a lower extent in the Eustachian tube, lung and trachea.

The protein localises to the secreted. Its subcellular location is the membrane. Its function is as follows. Has antibacterial activity against Gram-positive bacterium S.pneumoniae Serotype 14. Is also active against Gram-negative bacteria M.catarrhalis 1857, and non-typeable H.influenzae strains 86-028NP and 1128. Has antifungal activity against C.albicans. May have a role in maintaining sterility in the middle ear. May act as a ligand for C-C chemokine receptor CCR6. Positively regulates the sperm motility and bactericidal activity in a CCR6-dependent manner. Binds to CCR6 and triggers Ca2+ mobilization in the sperm which is important for its motility. The chain is Beta-defensin 1 (DEFB1) from Chinchilla lanigera (Long-tailed chinchilla).